The primary structure comprises 849 residues: Trehalose-phosphatase (849 aa).

A glycosyltransferase region spans residues Met1 to Thr558.

This sequence in the N-terminal section; belongs to the glycosyltransferase 20 family. In the C-terminal section; belongs to the trehalose phosphatase family. Requires Mg(2+) as cofactor.

The protein resides in the cytoplasm. The protein localises to the nucleus. It carries out the reaction alpha,alpha-trehalose 6-phosphate + H2O = alpha,alpha-trehalose + phosphate. The protein operates within carbohydrate biosynthesis. Functionally, phosphatase catalytic subunit of the trehalose synthase complex that catalyzes the production of trehalose from glucose-6-phosphate and UDP-glucose in a two step process. This is Trehalose-phosphatase (tps2) from Schizosaccharomyces pombe (strain 972 / ATCC 24843) (Fission yeast).